The chain runs to 202 residues: Nucleoid occlusion factor SlmA (202 aa).

Residues 14–75 enclose the HTH tetR-type domain; sequence KERQQQVLEV…ALIERIEQTL (62 aa). A DNA-binding region (H-T-H motif) is located at residues 38–57; sequence TTERLAKAVGVSEGALYRYF.

It belongs to the nucleoid occlusion factor SlmA family. As to quaternary structure, homodimer. Interacts with FtsZ.

It localises to the cytoplasm. The protein localises to the nucleoid. Required for nucleoid occlusion (NO) phenomenon, which prevents Z-ring formation and cell division over the nucleoid. Acts as a DNA-associated cell division inhibitor that binds simultaneously chromosomal DNA and FtsZ, and disrupts the assembly of FtsZ polymers. SlmA-DNA-binding sequences (SBS) are dispersed on non-Ter regions of the chromosome, preventing FtsZ polymerization at these regions. In Haemophilus ducreyi (strain 35000HP / ATCC 700724), this protein is Nucleoid occlusion factor SlmA.